The primary structure comprises 440 residues: MSKKFFIKTFGCQMNFNDSERIRGLLKTIGYEQTDNWEEADLIILNTCTIREKPDQKVLSHLGEYKKIKEKNPKALIAVAGCLAQRTGWELVKKAPVIDIMFSSFNMHQLPELINQAQAGYKAIAILDELPQDEDKIWEYPVERDNKYCAYVTIIKGCDKNCTYCVVPRTRGKERSRALHSILDEVKRLVDDGVREIHLLGQNVTAWGKDFEKPIPFSELLYQVSKIDGVERIRFTTGHPRDLTDDIIEAMADIPQVCNALHLPFQAGSNRILALMDRGYTKEEYLEKIEKLKEKVKDIAMSTDVIVGFPTETEEDFEHTLDVLKKVRFEQVFSFKFSPRPGTPAAEMEGQIPDDVKTERMRRLLELQKSILSEIAKKYEGTVQEVLVEEEKNGELIGRTTTNKWASFKGDPSLLGKIVKIKVIKSSPFSLEGELLEVIK.

The MTTase N-terminal domain maps to 3–119; it reads KKFFIKTFGC…LPELINQAQA (117 aa). [4Fe-4S] cluster contacts are provided by C12, C48, C82, C158, C162, and C165. The Radical SAM core domain occupies 144–374; sequence RDNKYCAYVT…LELQKSILSE (231 aa). The TRAM domain occupies 377–437; the sequence is KKYEGTVQEV…PFSLEGELLE (61 aa).

It belongs to the methylthiotransferase family. MiaB subfamily. In terms of assembly, monomer. Requires [4Fe-4S] cluster as cofactor.

It localises to the cytoplasm. It catalyses the reaction N(6)-dimethylallyladenosine(37) in tRNA + (sulfur carrier)-SH + AH2 + 2 S-adenosyl-L-methionine = 2-methylsulfanyl-N(6)-dimethylallyladenosine(37) in tRNA + (sulfur carrier)-H + 5'-deoxyadenosine + L-methionine + A + S-adenosyl-L-homocysteine + 2 H(+). In terms of biological role, catalyzes the methylthiolation of N6-(dimethylallyl)adenosine (i(6)A), leading to the formation of 2-methylthio-N6-(dimethylallyl)adenosine (ms(2)i(6)A) at position 37 in tRNAs that read codons beginning with uridine. This chain is tRNA-2-methylthio-N(6)-dimethylallyladenosine synthase, found in Aquifex aeolicus (strain VF5).